We begin with the raw amino-acid sequence, 636 residues long: Polyadenylate-binding protein 1 (636 aa).

Methionine 1 carries the N-acetylmethionine modification. RRM domains follow at residues alanine 11 to arginine 89, glycine 99 to serine 175, threonine 191 to lysine 268, and valine 294 to arginine 370. Residues arginine 166 to threonine 289 form a CSDE1-binding region. Lysine 299 is modified (N6-methyllysine). Serine 315 carries the post-translational modification Phosphoserine. Residue threonine 319 is modified to Phosphothreonine. Residues arginine 385, arginine 419, arginine 432, and arginine 436 each carry the omega-N-methylarginine modification. 2 positions are modified to omega-N-methylated arginine; by CARM1: arginine 455 and arginine 460. An omega-N-methylarginine mark is found at arginine 475 and arginine 481. Arginine 493 carries the asymmetric dimethylarginine; alternate modification. Arginine 493 is modified (dimethylated arginine; alternate). Residue arginine 493 is modified to Omega-N-methylarginine; alternate. Arginine 506 carries the post-translational modification Omega-N-methylarginine. An N6-acetyllysine modification is found at lysine 512. Residue arginine 518 is modified to Omega-N-methylarginine. In terms of domain architecture, PABC spans glutamine 542 to alanine 619.

It belongs to the polyadenylate-binding protein type-1 family. As to quaternary structure, may form homodimers. Component of a multisubunit autoregulatory ribonucleoprotein complex (ARC), at least composed of IGF2BP1, PABPC1 and CSDE1. Directly interacts with IGF2BP1. Part of a complex associated with the FOS mCRD domain and consisting of HNRPD, SYNCRIP, PAIP1 and CSDE1/UNR. Interacts with PAIP1 and PAIP2 (via the PABPC1-interacting motifs PAM1 and PAM2). Interacts with PAIP1 with a 1:1 stoichiometry and with PAIP2 with a 1:2 stoichiometry. The interaction with CSDE1 is direct and RNA-independent. Found in a mRNP complex with YBX2. Interacts with TENT2/GLD2. Identified in the spliceosome C complex. Identified in a mRNP complex, at least composed of DHX9, DDX3X, ELAVL1, HNRNPU, IGF2BP1, ILF3, PABPC1, PCBP2, PTBP2, STAU1, STAU2, SYNCRIP and YBX1. The interaction with DDX3X is direct and RNA-independent. This interaction increases in stressed cells and decreases during cell recovery. Identified in a IGF2BP1-dependent mRNP granule complex containing untranslated mRNAs. Interacts with NXF1/TAP. Interacts with PIWIL1. Interacts with AGO1, AGO2, GSPT1 and GSPT2. Interacts with LARP4B. Interacts (via the second and third RRM domains and the C-terminus) with PAIP2B (via central acidic portion and C-terminus). Forms a complex with LARP1 and SHFL. Interacts with LARP4. Interacts with ZFC3H1 in a RNase-sensitive manner. Interacts with TRIM71 (via NHL repeats) in an RNA-dependent manner. Interacts with TENT5C; the interaction has no effect on TENT5C poly(A) polymerase function. Interacts with G3BP1 and G3BP2. Interacts with ENDOV; the interaction is RNA-dependent and stimulates ENDOV activity. Interacts with UPF1; the interaction is RNA-dependent. Interacts with IGF2BP2 and IGF2BP3. May interact with SETX. Interacts with RBM46. Interacts with PAN3. Post-translationally, phosphorylated by MAPKAPK2. Methylated by CARM1. Arg-493 is dimethylated, probably to asymmetric dimethylarginine.

It is found in the cytoplasm. The protein localises to the stress granule. Its subcellular location is the nucleus. The protein resides in the cell projection. It localises to the lamellipodium. Functionally, binds the poly(A) tail of mRNA, including that of its own transcript, and regulates processes of mRNA metabolism such as pre-mRNA splicing and mRNA stability. Its function in translational initiation regulation can either be enhanced by PAIP1 or repressed by PAIP2. Can probably bind to cytoplasmic RNA sequences other than poly(A) in vivo. Binds to N6-methyladenosine (m6A)-containing mRNAs and contributes to MYC stability by binding to m6A-containing MYC mRNAs. Involved in translationally coupled mRNA turnover. Implicated with other RNA-binding proteins in the cytoplasmic deadenylation/translational and decay interplay of the FOS mRNA mediated by the major coding-region determinant of instability (mCRD) domain. Involved in regulation of nonsense-mediated decay (NMD) of mRNAs containing premature stop codons; for the recognition of premature termination codons (PTC) and initiation of NMD a competitive interaction between UPF1 and PABPC1 with the ribosome-bound release factors is proposed. By binding to long poly(A) tails, may protect them from uridylation by ZCCHC6/ZCCHC11 and hence contribute to mRNA stability. The sequence is that of Polyadenylate-binding protein 1 (PABPC1) from Bos taurus (Bovine).